A 611-amino-acid chain; its full sequence is Rho GTPase-activating protein gacN (611 aa).

The region spanning 24 to 219 is the Rho-GAP domain; that stretch reads KTFKKILKPG…VLIEEFHVLY (196 aa). The stretch at 236–499 forms a coiled coil; sequence IREDKRSTSE…TKLQKSSSSS (264 aa). Basic and acidic residues predominate over residues 476–491; that stretch reads NQLEKEKSKLQDELTK. Residues 476–550 form a disordered region; it reads NQLEKEKSKL…TTPPPPLDED (75 aa). Low complexity-rich tracts occupy residues 495 to 509 and 527 to 540; these read SSSSSSSSSSSSSSS and TTTTTTTTSPAQQP.

The protein localises to the cytoplasm. Functionally, rho GTPase-activating protein involved in the signal transduction pathway. This chain is Rho GTPase-activating protein gacN (gacN), found in Dictyostelium discoideum (Social amoeba).